The chain runs to 332 residues: 4-hydroxy-3-methylbut-2-enyl diphosphate reductase (332 aa).

Residue cysteine 34 participates in [4Fe-4S] cluster binding. (2E)-4-hydroxy-3-methylbut-2-enyl diphosphate is bound by residues histidine 63 and histidine 96. The dimethylallyl diphosphate site is built by histidine 63 and histidine 96. The isopentenyl diphosphate site is built by histidine 63 and histidine 96. Cysteine 118 serves as a coordination point for [4Fe-4S] cluster. Residue histidine 146 participates in (2E)-4-hydroxy-3-methylbut-2-enyl diphosphate binding. Position 146 (histidine 146) interacts with dimethylallyl diphosphate. Histidine 146 lines the isopentenyl diphosphate pocket. The Proton donor role is filled by glutamate 148. Threonine 186 serves as a coordination point for (2E)-4-hydroxy-3-methylbut-2-enyl diphosphate. Position 216 (cysteine 216) interacts with [4Fe-4S] cluster. (2E)-4-hydroxy-3-methylbut-2-enyl diphosphate is bound by residues serine 244, serine 245, asparagine 246, and serine 289. Serine 244, serine 245, asparagine 246, and serine 289 together coordinate dimethylallyl diphosphate. Positions 244, 245, 246, and 289 each coordinate isopentenyl diphosphate.

It belongs to the IspH family. [4Fe-4S] cluster serves as cofactor.

It carries out the reaction isopentenyl diphosphate + 2 oxidized [2Fe-2S]-[ferredoxin] + H2O = (2E)-4-hydroxy-3-methylbut-2-enyl diphosphate + 2 reduced [2Fe-2S]-[ferredoxin] + 2 H(+). It catalyses the reaction dimethylallyl diphosphate + 2 oxidized [2Fe-2S]-[ferredoxin] + H2O = (2E)-4-hydroxy-3-methylbut-2-enyl diphosphate + 2 reduced [2Fe-2S]-[ferredoxin] + 2 H(+). It participates in isoprenoid biosynthesis; dimethylallyl diphosphate biosynthesis; dimethylallyl diphosphate from (2E)-4-hydroxy-3-methylbutenyl diphosphate: step 1/1. The protein operates within isoprenoid biosynthesis; isopentenyl diphosphate biosynthesis via DXP pathway; isopentenyl diphosphate from 1-deoxy-D-xylulose 5-phosphate: step 6/6. Catalyzes the conversion of 1-hydroxy-2-methyl-2-(E)-butenyl 4-diphosphate (HMBPP) into a mixture of isopentenyl diphosphate (IPP) and dimethylallyl diphosphate (DMAPP). Acts in the terminal step of the DOXP/MEP pathway for isoprenoid precursor biosynthesis. This chain is 4-hydroxy-3-methylbut-2-enyl diphosphate reductase, found in Mycobacterium leprae (strain TN).